Consider the following 457-residue polypeptide: DNA repair protein RadA (457 aa).

A C4-type zinc finger spans residues 12 to 29; it reads CQACGYESAKWMGKCPNC. 97-104 is an ATP binding site; the sequence is GDPGIGKS. A RadA KNRFG motif motif is present at residues 254–258; it reads KNRFG. Positions 353-457 are lon-protease-like; it reads DAYLKAAGGV…GEALKKALPD (105 aa).

It belongs to the RecA family. RadA subfamily.

Functionally, DNA-dependent ATPase involved in processing of recombination intermediates, plays a role in repairing DNA breaks. Stimulates the branch migration of RecA-mediated strand transfer reactions, allowing the 3' invading strand to extend heteroduplex DNA faster. Binds ssDNA in the presence of ADP but not other nucleotides, has ATPase activity that is stimulated by ssDNA and various branched DNA structures, but inhibited by SSB. Does not have RecA's homology-searching function. This chain is DNA repair protein RadA, found in Listeria monocytogenes serovar 1/2a (strain ATCC BAA-679 / EGD-e).